The chain runs to 184 residues: Photosystem I assembly protein Ycf4 (184 aa).

2 helical membrane passes run 19 to 39 (LSNF…LLVG) and 57 to 77 (FIFF…LFIS).

This sequence belongs to the Ycf4 family.

The protein localises to the plastid. It localises to the chloroplast thylakoid membrane. Its function is as follows. Seems to be required for the assembly of the photosystem I complex. In Jasminum nudiflorum (Winter jasmine), this protein is Photosystem I assembly protein Ycf4.